Reading from the N-terminus, the 97-residue chain is U-reduvitoxin-Pr10a (97 aa).

A signal peptide spans 1-18 (MKTALFLVFALAFIAVEG). Pacifastin domains are found at residues 22 to 59 (KACS…CPPR) and 62 to 97 (KQSC…RLCW). 3 disulfides stabilise this stretch: Cys-24–Cys-42, Cys-37–Cys-56, and Cys-40–Cys-51. The segment at 57-59 (PPR) is pro-Pro-Arg motif necessary for proteolytic processing. 3 cysteine pairs are disulfide-bonded: Cys-65–Cys-82, Cys-77–Cys-96, and Cys-80–Cys-91.

Belongs to the protease inhibitor I19 family. As to expression, expressed by the venom gland.

The protein localises to the secreted. Functionally, inhibits trypsin activity and prophenoloxidase (PPO) activation, an enzyme essential for both clotting and insect innate immune responses. It does not inhibit activity of chymotrypsin and protease K, and has no effect on phenoloxidase (PO) activity. The chain is U-reduvitoxin-Pr10a from Platymeris rhadamanthus (Red spot assassin bug).